The primary structure comprises 339 residues: Dihydroorotate dehydrogenase (quinone) (339 aa).

Residues 62-66 (AGLDK) and Thr-86 contribute to the FMN site. Lys-66 lines the substrate pocket. Position 111 to 115 (111 to 115 (NRMGF)) interacts with substrate. Positions 139 and 172 each coordinate FMN. Asn-172 lines the substrate pocket. Ser-175 acts as the Nucleophile in catalysis. Asn-177 serves as a coordination point for substrate. Lys-217 and Thr-245 together coordinate FMN. Position 246–247 (246–247 (NT)) interacts with substrate. Residues Gly-268, Gly-297, and 318–319 (YS) each bind FMN.

This sequence belongs to the dihydroorotate dehydrogenase family. Type 2 subfamily. As to quaternary structure, monomer. FMN serves as cofactor.

Its subcellular location is the cell membrane. It carries out the reaction (S)-dihydroorotate + a quinone = orotate + a quinol. It participates in pyrimidine metabolism; UMP biosynthesis via de novo pathway; orotate from (S)-dihydroorotate (quinone route): step 1/1. Catalyzes the conversion of dihydroorotate to orotate with quinone as electron acceptor. The protein is Dihydroorotate dehydrogenase (quinone) of Shewanella frigidimarina (strain NCIMB 400).